Reading from the N-terminus, the 128-residue chain is Aspartate 1-decarboxylase (128 aa).

Catalysis depends on Ser-25, which acts as the Schiff-base intermediate with substrate; via pyruvic acid. Pyruvic acid (Ser) is present on Ser-25. A substrate-binding site is contributed by Thr-57. The Proton donor role is filled by Tyr-58. Position 73–75 (73–75 (GAA)) interacts with substrate.

Belongs to the PanD family. Heterooctamer of four alpha and four beta subunits. It depends on pyruvate as a cofactor. Post-translationally, is synthesized initially as an inactive proenzyme, which is activated by self-cleavage at a specific serine bond to produce a beta-subunit with a hydroxyl group at its C-terminus and an alpha-subunit with a pyruvoyl group at its N-terminus.

It is found in the cytoplasm. It carries out the reaction L-aspartate + H(+) = beta-alanine + CO2. It participates in cofactor biosynthesis; (R)-pantothenate biosynthesis; beta-alanine from L-aspartate: step 1/1. Catalyzes the pyruvoyl-dependent decarboxylation of aspartate to produce beta-alanine. The polypeptide is Aspartate 1-decarboxylase (Chlorobium phaeovibrioides (strain DSM 265 / 1930) (Prosthecochloris vibrioformis (strain DSM 265))).